Here is a 37-residue protein sequence, read N- to C-terminus: Mu-thomitoxin-Hme1a (37 aa).

Intrachain disulfides connect cysteine 2-cysteine 18, cysteine 9-cysteine 22, and cysteine 17-cysteine 33. Phenylalanine 37 is subject to Phenylalanine amide.

The protein belongs to the neurotoxin 01 (U2-agtx) family. Post-translationally, contains 3 disulfide bonds. In terms of tissue distribution, expressed by the venom gland.

It is found in the secreted. In terms of biological role, blocks the Nav1.2/SCN2A, Nav1.4/SCN4A, and Nav1.6/SCN8A sodium channels. Reduces the peak amplitude of the sodium current and negatively shifts the steady-state inactivation process. Does not shift the threshold potential of activation or the voltage corresponding to maximal current. Does not change the reversal potential of the sodium current. May act on site 1 of the receptor. The sequence is that of Mu-thomitoxin-Hme1a from Heriaeus mellotteei (Crab spider).